Reading from the N-terminus, the 144-residue chain is Small ribosomal subunit protein bS6 (144 aa).

The interval 99–144 (KASPLAPCEEKGEEGKAEDAADELTTFGMADDDDLGDDDDTVEAGI) is disordered. Basic and acidic residues predominate over residues 106-117 (CEEKGEEGKAED). A compositionally biased stretch (acidic residues) spans 128-144 (ADDDDLGDDDDTVEAGI).

This sequence belongs to the bacterial ribosomal protein bS6 family.

Its function is as follows. Binds together with bS18 to 16S ribosomal RNA. This chain is Small ribosomal subunit protein bS6, found in Magnetococcus marinus (strain ATCC BAA-1437 / JCM 17883 / MC-1).